The primary structure comprises 135 residues: Transcription antitermination protein NusB (135 aa).

It belongs to the NusB family.

Functionally, involved in transcription antitermination. Required for transcription of ribosomal RNA (rRNA) genes. Binds specifically to the boxA antiterminator sequence of the ribosomal RNA (rrn) operons. The protein is Transcription antitermination protein NusB of Bdellovibrio bacteriovorus (strain ATCC 15356 / DSM 50701 / NCIMB 9529 / HD100).